The primary structure comprises 260 residues: Global transcriptional regulator CodY (260 aa).

A GAF domain region spans residues 1-159 (MPNLLQKTRK…SSTVVGIQLL (159 aa)). Positions 207–226 (ASVIADRIGITRSVIVNALR) form a DNA-binding region, H-T-H motif.

It belongs to the CodY family.

It is found in the cytoplasm. Functionally, DNA-binding global transcriptional regulator which is involved in the adaptive response to starvation and acts by directly or indirectly controlling the expression of numerous genes in response to nutrient availability. During rapid exponential growth, CodY is highly active and represses genes whose products allow adaptation to nutrient depletion. The polypeptide is Global transcriptional regulator CodY (Streptococcus equi subsp. zooepidemicus (strain MGCS10565)).